The sequence spans 610 residues: Phosphoenolpyruvate carboxykinase [GTP] (610 aa).

Residues Arg-82 and 221 to 223 (YGG) contribute to the substrate site. Mn(2+) contacts are provided by Lys-230 and His-250. Ser-272 is a substrate binding site. 273–278 (ACGKTN) lines the GTP pocket. Cys-274 is a catalytic residue. Asp-297 contacts Mn(2+). Position 387–389 (387–389 (NSR)) interacts with substrate. GTP-binding positions include Arg-389, Arg-420, and 515–518 (FGDN).

This sequence belongs to the phosphoenolpyruvate carboxykinase [GTP] family. As to quaternary structure, monomer. The cofactor is Mn(2+).

It is found in the cytoplasm. It catalyses the reaction oxaloacetate + GTP = phosphoenolpyruvate + GDP + CO2. Its pathway is carbohydrate biosynthesis; gluconeogenesis. Functionally, catalyzes the conversion of oxaloacetate (OAA) to phosphoenolpyruvate (PEP), the rate-limiting step in the metabolic pathway that produces glucose from lactate and other precursors derived from the citric acid cycle. This Corynebacterium glutamicum (strain R) protein is Phosphoenolpyruvate carboxykinase [GTP].